Reading from the N-terminus, the 75-residue chain is CDC42 small effector protein 1 (75 aa).

2 S-palmitoyl cysteine lipidation sites follow: cysteine 10 and cysteine 11. One can recognise a CRIB domain in the interval 30–43 (IGEPTNFVHLTHIG). The tract at residues 45–75 (GEMADGMQPSGPIKEQMRSKVPHANGRNSLL) is disordered.

Belongs to the CDC42SE/SPEC family.

The protein localises to the cytoplasm. Its subcellular location is the cytoskeleton. It is found in the cell membrane. Functionally, probably involved in the organization of the actin cytoskeleton by acting downstream of CDC42, inducing actin filament assembly. This chain is CDC42 small effector protein 1 (cdc42se1), found in Danio rerio (Zebrafish).